Consider the following 408-residue polypeptide: Tryptophan synthase beta chain (408 aa).

At lysine 90 the chain carries N6-(pyridoxal phosphate)lysine.

Belongs to the TrpB family. In terms of assembly, tetramer of two alpha and two beta chains. The cofactor is pyridoxal 5'-phosphate.

The catalysed reaction is (1S,2R)-1-C-(indol-3-yl)glycerol 3-phosphate + L-serine = D-glyceraldehyde 3-phosphate + L-tryptophan + H2O. It functions in the pathway amino-acid biosynthesis; L-tryptophan biosynthesis; L-tryptophan from chorismate: step 5/5. Functionally, the beta subunit is responsible for the synthesis of L-tryptophan from indole and L-serine. The protein is Tryptophan synthase beta chain of Bacillus licheniformis (strain ATCC 14580 / DSM 13 / JCM 2505 / CCUG 7422 / NBRC 12200 / NCIMB 9375 / NCTC 10341 / NRRL NRS-1264 / Gibson 46).